The chain runs to 344 residues: Thioredoxin domain-containing protein 15 (344 aa).

Residues 1–20 form the signal peptide; that stretch reads MQLLCWWQVLLWVLGLPAHG. At 21–305 the chain is on the extracellular side; it reads LEVAEDSGHP…GPLPSTLIKT (285 aa). Disordered regions lie at residues 55–119 and 136–156; these read DHRD…FGLQ and GVTE…SLKS. Residues 88–97 are compositionally biased toward basic and acidic residues; the sequence is EDQRSPEAHD. Residues 163–280 enclose the Thioredoxin domain; it reads ERNVTGLENF…LKIFIFNQTG (118 aa). N-linked (GlcNAc...) asparagine glycans are attached at residues N171, N178, N190, and N277. A helical membrane pass occupies residues 306 to 326; it reads VDWLLVFSLFFLISFIMYATI. The Cytoplasmic portion of the chain corresponds to 327-344; the sequence is RTESIRWLIPGQEQEHAE.

It is found in the cell projection. The protein localises to the cilium membrane. Acts as a positive regulator of ciliary hedgehog signaling. Required for cilia biogenesis. This chain is Thioredoxin domain-containing protein 15 (Txndc15), found in Mus musculus (Mouse).